The chain runs to 339 residues: Glycerol-3-phosphate dehydrogenase [NAD(P)+] (339 aa).

The NADPH site is built by Ser-11, Trp-12, and Lys-109. The sn-glycerol 3-phosphate site is built by Lys-109, Gly-140, and Ser-142. Ala-144 contacts NADPH. Residues Lys-195, Asp-249, Ser-259, Arg-260, and Asn-261 each coordinate sn-glycerol 3-phosphate. Lys-195 (proton acceptor) is an active-site residue. Residue Arg-260 participates in NADPH binding. Residues Val-284 and Glu-286 each contribute to the NADPH site.

The protein belongs to the NAD-dependent glycerol-3-phosphate dehydrogenase family.

It localises to the cytoplasm. The enzyme catalyses sn-glycerol 3-phosphate + NAD(+) = dihydroxyacetone phosphate + NADH + H(+). It carries out the reaction sn-glycerol 3-phosphate + NADP(+) = dihydroxyacetone phosphate + NADPH + H(+). The protein operates within membrane lipid metabolism; glycerophospholipid metabolism. In terms of biological role, catalyzes the reduction of the glycolytic intermediate dihydroxyacetone phosphate (DHAP) to sn-glycerol 3-phosphate (G3P), the key precursor for phospholipid synthesis. The protein is Glycerol-3-phosphate dehydrogenase [NAD(P)+] of Lactobacillus johnsonii (strain CNCM I-12250 / La1 / NCC 533).